The sequence spans 325 residues: 4-hydroxy-3-methylbut-2-enyl diphosphate reductase (325 aa).

A [4Fe-4S] cluster-binding site is contributed by cysteine 13. (2E)-4-hydroxy-3-methylbut-2-enyl diphosphate-binding residues include histidine 42 and histidine 76. 2 residues coordinate dimethylallyl diphosphate: histidine 42 and histidine 76. Isopentenyl diphosphate is bound by residues histidine 42 and histidine 76. A [4Fe-4S] cluster-binding site is contributed by cysteine 98. Histidine 126 provides a ligand contact to (2E)-4-hydroxy-3-methylbut-2-enyl diphosphate. Histidine 126 serves as a coordination point for dimethylallyl diphosphate. An isopentenyl diphosphate-binding site is contributed by histidine 126. Glutamate 128 functions as the Proton donor in the catalytic mechanism. Threonine 169 contacts (2E)-4-hydroxy-3-methylbut-2-enyl diphosphate. Cysteine 230 is a binding site for [4Fe-4S] cluster. (2E)-4-hydroxy-3-methylbut-2-enyl diphosphate-binding residues include serine 258, serine 259, asparagine 260, and serine 306. Serine 258, serine 259, asparagine 260, and serine 306 together coordinate dimethylallyl diphosphate. Positions 258, 259, 260, and 306 each coordinate isopentenyl diphosphate.

The protein belongs to the IspH family. [4Fe-4S] cluster serves as cofactor.

It catalyses the reaction isopentenyl diphosphate + 2 oxidized [2Fe-2S]-[ferredoxin] + H2O = (2E)-4-hydroxy-3-methylbut-2-enyl diphosphate + 2 reduced [2Fe-2S]-[ferredoxin] + 2 H(+). It carries out the reaction dimethylallyl diphosphate + 2 oxidized [2Fe-2S]-[ferredoxin] + H2O = (2E)-4-hydroxy-3-methylbut-2-enyl diphosphate + 2 reduced [2Fe-2S]-[ferredoxin] + 2 H(+). Its pathway is isoprenoid biosynthesis; dimethylallyl diphosphate biosynthesis; dimethylallyl diphosphate from (2E)-4-hydroxy-3-methylbutenyl diphosphate: step 1/1. It participates in isoprenoid biosynthesis; isopentenyl diphosphate biosynthesis via DXP pathway; isopentenyl diphosphate from 1-deoxy-D-xylulose 5-phosphate: step 6/6. Functionally, catalyzes the conversion of 1-hydroxy-2-methyl-2-(E)-butenyl 4-diphosphate (HMBPP) into a mixture of isopentenyl diphosphate (IPP) and dimethylallyl diphosphate (DMAPP). Acts in the terminal step of the DOXP/MEP pathway for isoprenoid precursor biosynthesis. In Chlorobium phaeobacteroides (strain BS1), this protein is 4-hydroxy-3-methylbut-2-enyl diphosphate reductase.